The following is a 385-amino-acid chain: Putative mitochondrial carrier protein TRV_02148.2 (385 aa).

2 Solcar repeats span residues 24–124 and 130–210; these read SNTL…LHAR and RTAG…LRRR. The next 5 membrane-spanning stretches (helical) occupy residues 30-47, 132-150, 184-207, 263-279, and 294-310; these read GTAIALSTALLHPLDSIL, AGNELLLSLVSMAFVKLFT, WSAYGATLVLCVRSCVLPVVYLAL, YTICVLMVCLGLLLEVI, and VVTVAMMRLSAVMLYML.

It belongs to the mitochondrial carrier (TC 2.A.29) family.

It is found in the mitochondrion inner membrane. Functionally, may function as a mitochondrial transporter. In Trichophyton verrucosum (strain HKI 0517), this protein is Putative mitochondrial carrier protein TRV_02148.2.